We begin with the raw amino-acid sequence, 539 residues long: uncharacterized protein (539 aa).

2 consecutive ABC transporter domains span residues 8–265 and 307–537; these read VRIT…SRAL and IELD…IGDM. 339-346 is a binding site for ATP; sequence GDNGSGKS.

This sequence belongs to the ABC transporter superfamily.

It localises to the mitochondrion. This is an uncharacterized protein from Saccharomyces cerevisiae (strain ATCC 204508 / S288c) (Baker's yeast).